A 355-amino-acid chain; its full sequence is Tetraacyldisaccharide 4'-kinase (355 aa).

Residue 49 to 56 (TAGGTGKT) coordinates ATP.

Belongs to the LpxK family.

It carries out the reaction a lipid A disaccharide + ATP = a lipid IVA + ADP + H(+). It participates in glycolipid biosynthesis; lipid IV(A) biosynthesis; lipid IV(A) from (3R)-3-hydroxytetradecanoyl-[acyl-carrier-protein] and UDP-N-acetyl-alpha-D-glucosamine: step 6/6. In terms of biological role, transfers the gamma-phosphate of ATP to the 4'-position of a tetraacyldisaccharide 1-phosphate intermediate (termed DS-1-P) to form tetraacyldisaccharide 1,4'-bis-phosphate (lipid IVA). This is Tetraacyldisaccharide 4'-kinase from Chlorobium luteolum (strain DSM 273 / BCRC 81028 / 2530) (Pelodictyon luteolum).